Reading from the N-terminus, the 309-residue chain is THAP domain-containing protein 7 (309 aa).

Residues 1–93 (MPRHCSAAGC…LKEGAVPTIF (93 aa)) form a THAP-type zinc finger. S162 bears the Phosphoserine mark. Positions 176–210 (SDLLGPLGAQADEAGCSTQPSPEQHPSPLEPQPAS) are disordered. Residues 198–209 (EQHPSPLEPQPA) show a composition bias toward pro residues. The residue at position 210 (S210) is a Phosphoserine. An HCFC1-binding motif (HBM) motif is present at residues 229-232 (EHSY).

Forms homodimers. Interacts with HDAC3 and nuclear hormone receptor corepressors. Interacts via HBM with HCFC1.

Its subcellular location is the nucleus. The protein localises to the chromosome. In terms of biological role, chromatin-associated, histone tail-binding protein that represses transcription via recruitment of HDAC3 and nuclear hormone receptor corepressors. The chain is THAP domain-containing protein 7 (Thap7) from Mus musculus (Mouse).